The sequence spans 258 residues: Phosphate import ATP-binding protein PstB 1 (258 aa).

An ABC transporter domain is found at 5 to 247 (LDLTDVNIYY…EKIFSNPNQK (243 aa)). 37–44 (GPSGCGKT) provides a ligand contact to ATP.

It belongs to the ABC transporter superfamily. Phosphate importer (TC 3.A.1.7) family. As to quaternary structure, the complex is composed of two ATP-binding proteins (PstB), two transmembrane proteins (PstC and PstA) and a solute-binding protein (PstS).

The protein localises to the cell membrane. The catalysed reaction is phosphate(out) + ATP + H2O = ADP + 2 phosphate(in) + H(+). Functionally, part of the ABC transporter complex PstSACB involved in phosphate import. Responsible for energy coupling to the transport system. This is Phosphate import ATP-binding protein PstB 1 from Mycobacterium tuberculosis (strain CDC 1551 / Oshkosh).